Consider the following 258-residue polypeptide: Global transcriptional regulator CodY (258 aa).

The segment at 1 to 156 is GAF domain; the sequence is MSSLLSKTRR…SATIVGMEML (156 aa). Positions 204 to 223 form a DNA-binding region, H-T-H motif; that stretch reads ASKIADKVGITRSVIVNALR.

Belongs to the CodY family.

The protein localises to the cytoplasm. In terms of biological role, DNA-binding global transcriptional regulator which is involved in the adaptive response to starvation and acts by directly or indirectly controlling the expression of numerous genes in response to nutrient availability. During rapid exponential growth, CodY is highly active and represses genes whose products allow adaptation to nutrient depletion. In Clostridium botulinum (strain Alaska E43 / Type E3), this protein is Global transcriptional regulator CodY.